The primary structure comprises 298 residues: Ethanolamine ammonia-lyase small subunit (298 aa).

The adenosylcob(III)alamin site is built by valine 210, glutamate 231, and cysteine 261.

The protein belongs to the EutC family. As to quaternary structure, the basic unit is a heterodimer which dimerizes to form tetramers. The heterotetramers trimerize; 6 large subunits form a core ring with 6 small subunits projecting outwards. Requires adenosylcob(III)alamin as cofactor.

Its subcellular location is the bacterial microcompartment. The catalysed reaction is ethanolamine = acetaldehyde + NH4(+). Its pathway is amine and polyamine degradation; ethanolamine degradation. In terms of biological role, catalyzes the deamination of various vicinal amino-alcohols to oxo compounds. Allows this organism to utilize ethanolamine as the sole source of nitrogen and carbon in the presence of external vitamin B12. In Salmonella typhi, this protein is Ethanolamine ammonia-lyase small subunit.